We begin with the raw amino-acid sequence, 773 residues long: ATP-dependent RNA helicase MAK5 (773 aa).

Residues 73-82 are compositionally biased toward basic and acidic residues; sequence KDSNKEKVGD. 2 disordered regions span residues 73–99 and 114–144; these read KDSNKEKVGDDQESVENESGSDSESEL and SAASYSSSDEDEQGNIESSKLTDPSEDVDED. Over residues 83-99 the composition is skewed to acidic residues; sequence DQESVENESGSDSESEL. Residue threonine 135 is modified to Phosphothreonine. A Phosphoserine modification is found at serine 138. The Q motif signature appears at 171–199; it reads EWTNLAPLSMTILQSLQNLNFLRPTEIQK. The Helicase ATP-binding domain maps to 202–399; it reads IPVIMQGVDV…SSSRQVKDRR (198 aa). 215-222 serves as a coordination point for ATP; sequence ASTGSGKT. The DEAD box motif lies at 333-336; sequence DEAD. The Helicase C-terminal domain occupies 452–615; it reads DLYCYYFLTM…STDLNSRSTN (164 aa). Serine 678 carries the post-translational modification Phosphoserine.

It belongs to the DEAD box helicase family. DDX24/MAK5 subfamily.

The protein localises to the nucleus. The protein resides in the nucleolus. The enzyme catalyses ATP + H2O = ADP + phosphate + H(+). Functionally, ATP-binding RNA helicase involved in the biogenesis of 60S ribosomal subunits and is required for the normal formation of 25S and 5.8S rRNAs. Required for the maintenance of dsRNA killer plasmid. The chain is ATP-dependent RNA helicase MAK5 (MAK5) from Saccharomyces cerevisiae (strain ATCC 204508 / S288c) (Baker's yeast).